A 199-amino-acid polypeptide reads, in one-letter code: Transgelin-2 (199 aa).

A2 is subject to N-acetylalanine. Phosphoserine is present on S11. K17 and K20 each carry N6-acetyllysine. One can recognise a Calponin-homology (CH) domain in the interval 24 to 136 (ADLEQILIQW…RTLMNLGGLA (113 aa)). S163 carries the phosphoserine modification. K171 is covalently cross-linked (Glycyl lysine isopeptide (Lys-Gly) (interchain with G-Cter in SUMO2)). The Calponin-like repeat unit spans residues 174–199 (IGLQMGTNRGASQAGMTGYGMPRQIL). T180 bears the Phosphothreonine mark. Omega-N-methylarginine occurs at positions 182 and 196.

It belongs to the calponin family.

The protein is Transgelin-2 (TAGLN2) of Bos taurus (Bovine).